We begin with the raw amino-acid sequence, 268 residues long: Tryptophan synthase alpha chain (268 aa).

Catalysis depends on proton acceptor residues Glu49 and Asp60.

This sequence belongs to the TrpA family. Tetramer of two alpha and two beta chains.

The catalysed reaction is (1S,2R)-1-C-(indol-3-yl)glycerol 3-phosphate + L-serine = D-glyceraldehyde 3-phosphate + L-tryptophan + H2O. It participates in amino-acid biosynthesis; L-tryptophan biosynthesis; L-tryptophan from chorismate: step 5/5. The alpha subunit is responsible for the aldol cleavage of indoleglycerol phosphate to indole and glyceraldehyde 3-phosphate. The polypeptide is Tryptophan synthase alpha chain (Shigella flexneri serotype 5b (strain 8401)).